Consider the following 105-residue polypeptide: MAKKVKSKVDTINTKIQLVMKSGKYVLGTQQSLKTLRQGRSKLVVISANCPPIRKAEIEYYCTLSKTPIHHYSGNNLDLGTACGRHFRACVLSITDVGDSDITSA.

The protein belongs to the eukaryotic ribosomal protein eL30 family.

The protein is Large ribosomal subunit protein eL30 (RPL30) of Trypanosoma brucei brucei.